Here is a 368-residue protein sequence, read N- to C-terminus: Putative transport protein bbp_117 (368 aa).

Transmembrane regions (helical) follow at residues 13–35 (VIFSLVFIFIMIISSLWIMRPFF), 39–61 (AWASMVVVATWPIFLKLQILLWG), 68–90 (VMMTFSLLLVFIIPIVCLVNSLI), 159–181 (HFGRFILHLIFMLIFSALLYWNG), 216–238 (LGVVVTALVQGILSGIGLAISGI), 248–270 (IIIFCLVQLGPLPVLIPAIIWLY), 277–299 (WGTVLLIWSCVVCILDHILRPIL), and 314–336 (GVIGGLIAFGMIGLFIGPVVLII).

The protein belongs to the autoinducer-2 exporter (AI-2E) (TC 2.A.86) family.

Its subcellular location is the cell membrane. The chain is Putative transport protein bbp_117 from Buchnera aphidicola subsp. Baizongia pistaciae (strain Bp).